The primary structure comprises 607 residues: Chaperone protein DnaK (607 aa).

The residue at position 174 (Thr-174) is a Phosphothreonine; by autocatalysis. Residues 571 to 607 (AAMYQKQAQQQQPGPGPDAGKDKDDKDKTVDADYEVK) form a disordered region. A compositionally biased stretch (basic and acidic residues) spans 589–607 (AGKDKDDKDKTVDADYEVK).

It belongs to the heat shock protein 70 family.

Its function is as follows. Acts as a chaperone. The protein is Chaperone protein DnaK of Desulforudis audaxviator (strain MP104C).